The primary structure comprises 385 residues: Alanine--glyoxylate aminotransferase 1 (385 aa).

Lys-201 carries the post-translational modification N6-(pyridoxal phosphate)lysine. Arg-354 contributes to the substrate binding site.

Belongs to the class-V pyridoxal-phosphate-dependent aminotransferase family. Homodimer. The cofactor is pyridoxal 5'-phosphate.

It catalyses the reaction glyoxylate + L-alanine = glycine + pyruvate. It participates in amino-acid biosynthesis; glycine biosynthesis; glycine from glyoxylate: step 1/1. Functionally, has alanine:glyoxylate aminotransferase activity. In Saccharomyces cerevisiae (strain ATCC 204508 / S288c) (Baker's yeast), this protein is Alanine--glyoxylate aminotransferase 1.